The chain runs to 568 residues: MFS-type efflux transporter phmH (568 aa).

The span at 1 to 11 (MVSGTDTTEVG) shows a compositional bias: polar residues. Residues 1 to 39 (MVSGTDTTEVGATTKAPPSEGTEGILDDHSSNSQPQAEK) form a disordered region. 7 consecutive transmembrane segments (helical) span residues 45–65 (YPLS…VSAL), 101–121 (YVMI…GGSS), 134–154 (GIGA…LVPM), 161–181 (IGLL…VGGI), 199–219 (IFYI…LFLH), 237–257 (VIGN…LTYG), and 268–288 (IAAP…WEMS). N-linked (GlcNAc...) asparagine glycosylation occurs at Asn-303. The next 6 membrane-spanning stretches (helical) occupy residues 307–327 (AAAF…NFFY), 344–364 (VYTL…GAIV), 372–392 (TVHL…SILD), 399–419 (EWVI…STTL), 437–457 (TWSF…AAIF), and 515–535 (IGIV…EIHL). Asn-563 carries N-linked (GlcNAc...) asparagine glycosylation.

It belongs to the major facilitator superfamily.

Its subcellular location is the cell membrane. MFS-type efflux transporter; part of the gene cluster that mediates the biosynthesis of thethe mycotoxins phomacins, leucine-derived cytochalasans with potent actin polymerization-inhibitory activities and monocot-specific antigerminative activities. PhmH might be involved in the excretion of phomacins. The chain is MFS-type efflux transporter phmH from Phaeosphaeria nodorum (strain SN15 / ATCC MYA-4574 / FGSC 10173) (Glume blotch fungus).